An 87-amino-acid polypeptide reads, in one-letter code: uncharacterized protein (87 aa).

This is an uncharacterized protein from Dictyostelium discoideum (Social amoeba).